The following is a 1204-amino-acid chain: MITLRKSLSKSCKDLRILNGTTYVKGFCSTTTTDTTTTTSTSTTTDTDTNSEKSNKEKLFHQINELTKQSSFNKVLFYKKSAHETEGYSYKERQQFKQKQQKIKQIKHNQQLKQKQQIEQQKQKKLEQQQQQQQLELEKKQKFEQQLEQQQREQNQISLLEKSKDLESINDFGDFDFRELETKPLFSVPNVLINYLENEKTLSDHQKSDVVGSFYSDGEIPSVPHINLEEYTRSVLIEAYLEVCKPEYAFYYFKQSENNKTNSKGLLLMIEFYIKIGDIDSAFKFFEVNFKDYKDLISTNDYYKLFNGLITYSIDNQENIFDIKNKFFNVIINDNINNDIEKFNVGSLASMIESITPKYQPPPQEQQLMDDDSNSNSNNDSNNIIKNSSSKLEFNDDCVSNYKKLVNFDQLYSIYKNNYKKYTSDQRLIILSCILKYSIITADIELFLNTVNRVLVKDGIEKVEIPILQILFEAYTHTIPSDKPELVGQLKYLLTNYIKDMDSSDNGYKSISKLIAYNFSFKGDIKNSIYDQLCGIGIKSIEIDIENNIENSVLINKLKQEQREKERNQFIIFIQSIFPEDRIQHFVETALIYLINDNSYQEAVKLYIYFLKEGSVTGIDIFLKYHELSYKNIVYNNNNNNNNNNNNNNNNNNNNNNNNNIKNFTTFSENDHKTLKTFWERIKNNYVNNNNKQQQQEERDIENEFIFIGKGEINNDQLLEKFQYIKEFRNIKSFFNSYEENLNPNDFINYIKNIINKVNDDDNDNDNNNNNNNNNNNNNDDDDGGGHGGGDVFKTTTPKKVKPLISTIQKSQNELPTTTTYKEIIENTSFFRNQQYNFNRELSSTLNSPKSRLDLERLQSFLNCKSHTESMSFQQLCICLELVGDTGFKYDFYKNLNHIQKTLIITPQLCKNLFSTVTMDESIDILRRGLSRISPENLKSLGIWDGVFQGLLKDPLKTPLANFLMYNGFISKSSFDRYSYCQQIINTDIDAYYFFLDPSISYYDTFGGDIEDASNYNLKKDSSKTFFKPMEDFFITYLDTFFKASSPHEISQRPDYQTQFSNYTILSLIRLGKLNEAFKEIESLSPAKYNATTIGLVVFIYSKRYKQDKSKFLVEIQSLIQRIIFDLENKMGSEDARSYFHKYILKSLIINYGNIEMDNLIANVDVPKVLKDIDNSLAPNFDRRLIRKLFKVRGYIKYRFYRLN.

A compositionally biased stretch (low complexity) spans 32-48; sequence TTDTTTTTSTSTTTDTD. The disordered stretch occupies residues 32 to 55; it reads TTDTTTTTSTSTTTDTDTNSEKSN. TPR repeat units lie at residues 263-296, 379-412, and 583-617; these read SKGL…YKDL, NDSN…DQLY, and IQHF…GSVT. The tract at residues 360 to 387 is disordered; sequence QPPPQEQQLMDDDSNSNSNNDSNNIIKN. Low complexity predominate over residues 374–387; it reads NSNSNNDSNNIIKN. 2 disordered regions span residues 639-660 and 761-797; these read NNNN…NNNN and DDND…KTTT. Positions 766 to 778 are enriched in low complexity; it reads DNNNNNNNNNNNN.

The protein is TPR repeat-containing protein DDB_G0287999 of Dictyostelium discoideum (Social amoeba).